Here is a 309-residue protein sequence, read N- to C-terminus: Ribosomal RNA small subunit methyltransferase H (309 aa).

S-adenosyl-L-methionine is bound by residues 41–43 (GGH), Asp61, Phe85, Asp102, and Gln109.

The protein belongs to the methyltransferase superfamily. RsmH family.

Its subcellular location is the cytoplasm. The enzyme catalyses cytidine(1402) in 16S rRNA + S-adenosyl-L-methionine = N(4)-methylcytidine(1402) in 16S rRNA + S-adenosyl-L-homocysteine + H(+). In terms of biological role, specifically methylates the N4 position of cytidine in position 1402 (C1402) of 16S rRNA. The sequence is that of Ribosomal RNA small subunit methyltransferase H from Albidiferax ferrireducens (strain ATCC BAA-621 / DSM 15236 / T118) (Rhodoferax ferrireducens).